The sequence spans 137 residues: DNA-directed RNA polymerase I subunit RPA14 (137 aa).

The segment at 100–137 is disordered; it reads PPAQDFSAAPIQVSTTEKKETSIGVSATGGKKTTFADE. Ser121 carries the post-translational modification Phosphoserine.

In terms of assembly, component of the RNA polymerase I (Pol I) complex consisting of 14 subunits: RPA135, RPA190, RPC40, RPA14, RPB5, RPO26, RPA43, RPB8, RPA12, RPB10, RPC19, RPC10, RPA49 and RPA34. The complex is composed of a horseshoe-shaped core containing ten subunits (RPA135, RPA190, RPB5, RPO26, RPB8, RPB10, RPC10, RPA12, RPC19 and RPC40) where RPA135 and RPA190 form the DNA-binding cleft. Outside of the core, RPA14 and RPA43 form the stalk that mediates interactions with transcription initiation factors and newly synthesized RNA. The N-terminus is blocked.

Its subcellular location is the nucleus. The protein resides in the nucleolus. In terms of biological role, DNA-dependent RNA polymerases catalyze the transcription of DNA into RNA using the four ribonucleoside triphosphates as substrates. Component of RNA polymerase I (Pol I) which synthesizes ribosomal RNA precursors. RPA14 seems to play a role in the stability of subunits RPO26 and RPA43. In vitro, the RPA14-RPA43 subcomplex binds single-stranded RNA. The chain is DNA-directed RNA polymerase I subunit RPA14 (RPA14) from Saccharomyces cerevisiae (strain ATCC 204508 / S288c) (Baker's yeast).